The primary structure comprises 203 residues: Outer-membrane lipoprotein carrier protein (203 aa).

Positions 1–21 (MKKMAIACALLSSVVASSVWA) are cleaved as a signal peptide. Residues 178-203 (QQNGAVDPSKFTFTPPQGVTIDDQRK) are disordered.

Belongs to the LolA family. In terms of assembly, monomer.

The protein resides in the periplasm. Functionally, participates in the translocation of lipoproteins from the inner membrane to the outer membrane. Only forms a complex with a lipoprotein if the residue after the N-terminal Cys is not an aspartate (The Asp acts as a targeting signal to indicate that the lipoprotein should stay in the inner membrane). This is Outer-membrane lipoprotein carrier protein from Salmonella agona (strain SL483).